Consider the following 414-residue polypeptide: Protein RecA (414 aa).

78–85 (GPESSGKT) contacts ATP. The span at 361–384 (QEKAVEALKKEEGSKEDALTGNKD) shows a compositional bias: basic and acidic residues. Residues 361 to 414 (QEKAVEALKKEEGSKEDALTGNKDETDDSAQKNSAASKAKRAEVVGLPADDSLF) form a disordered region.

The protein belongs to the RecA family.

It is found in the cytoplasm. In terms of biological role, can catalyze the hydrolysis of ATP in the presence of single-stranded DNA, the ATP-dependent uptake of single-stranded DNA by duplex DNA, and the ATP-dependent hybridization of homologous single-stranded DNAs. It interacts with LexA causing its activation and leading to its autocatalytic cleavage. This is Protein RecA from Treponema denticola (strain ATCC 35405 / DSM 14222 / CIP 103919 / JCM 8153 / KCTC 15104).